The chain runs to 253 residues: MLKLRVIPCLDVKDGRVVKGVNFVSLRDAGDPVEQAKLYDAAGADELTFLDITASVENRDTILDVVRRTAEAICLPLTVGGGVRTCEDMRRLLLAGADKCAVNSAAIKNPDLIREASERFGSQCIVVAIDARSNGKGGWEVYAKGGREPTGLDVVEWARKMQDLGAGEILLTSMDRDGTRAGFDLDLLRAVCGAVTVPIVASGGVGELQHFVEGAEVGASGLLAASVFHFGQFRIDEVKNALNKAGLPVRLGE.

Residues Asp11 and Asp130 contribute to the active site.

Belongs to the HisA/HisF family. Heterodimer of HisH and HisF.

Its subcellular location is the cytoplasm. It carries out the reaction 5-[(5-phospho-1-deoxy-D-ribulos-1-ylimino)methylamino]-1-(5-phospho-beta-D-ribosyl)imidazole-4-carboxamide + L-glutamine = D-erythro-1-(imidazol-4-yl)glycerol 3-phosphate + 5-amino-1-(5-phospho-beta-D-ribosyl)imidazole-4-carboxamide + L-glutamate + H(+). It functions in the pathway amino-acid biosynthesis; L-histidine biosynthesis; L-histidine from 5-phospho-alpha-D-ribose 1-diphosphate: step 5/9. In terms of biological role, IGPS catalyzes the conversion of PRFAR and glutamine to IGP, AICAR and glutamate. The HisF subunit catalyzes the cyclization activity that produces IGP and AICAR from PRFAR using the ammonia provided by the HisH subunit. In Gluconobacter oxydans (strain 621H) (Gluconobacter suboxydans), this protein is Imidazole glycerol phosphate synthase subunit HisF.